The chain runs to 103 residues: Large ribosomal subunit protein bL21 (103 aa).

It belongs to the bacterial ribosomal protein bL21 family. In terms of assembly, part of the 50S ribosomal subunit. Contacts protein L20.

Functionally, this protein binds to 23S rRNA in the presence of protein L20. The polypeptide is Large ribosomal subunit protein bL21 (Clostridium kluyveri (strain NBRC 12016)).